We begin with the raw amino-acid sequence, 345 residues long: Phosphoribosylformylglycinamidine cyclo-ligase (345 aa).

Belongs to the AIR synthase family.

Its subcellular location is the cytoplasm. The enzyme catalyses 2-formamido-N(1)-(5-O-phospho-beta-D-ribosyl)acetamidine + ATP = 5-amino-1-(5-phospho-beta-D-ribosyl)imidazole + ADP + phosphate + H(+). The protein operates within purine metabolism; IMP biosynthesis via de novo pathway; 5-amino-1-(5-phospho-D-ribosyl)imidazole from N(2)-formyl-N(1)-(5-phospho-D-ribosyl)glycinamide: step 2/2. In Aeromonas hydrophila subsp. hydrophila (strain ATCC 7966 / DSM 30187 / BCRC 13018 / CCUG 14551 / JCM 1027 / KCTC 2358 / NCIMB 9240 / NCTC 8049), this protein is Phosphoribosylformylglycinamidine cyclo-ligase.